A 62-amino-acid polypeptide reads, in one-letter code: UPF0370 protein ESA_00777 (62 aa).

Residues 4-24 (LGKYWWVLVLVFLLGVLLNVI) form a helical membrane-spanning segment. The segment covering 36–51 (MDNRPELPPHRDFNDK) has biased composition (basic and acidic residues). Positions 36–62 (MDNRPELPPHRDFNDKWDDEDDWPKKK) are disordered. Over residues 52 to 62 (WDDEDDWPKKK) the composition is skewed to acidic residues.

It belongs to the UPF0370 family.

The protein resides in the cell membrane. This Cronobacter sakazakii (strain ATCC BAA-894) (Enterobacter sakazakii) protein is UPF0370 protein ESA_00777.